Here is a 976-residue protein sequence, read N- to C-terminus: Vacuolar membrane protease (976 aa).

Topologically, residues 1–15 (MKLKSVFRSVLKYRK) are cytoplasmic. Residues 16–36 (TNLSLLLLITYSIITLLYIFD) traverse the membrane as a helical segment. Residues 37-359 (HERYKLNLPK…KFFVISAKTL (323 aa)) lie on the Vacuolar side of the membrane. N-linked (GlcNAc...) asparagine glycans are attached at residues Asn96 and Asn121. Residues His156 and Asp168 each contribute to the Zn(2+) site. N-linked (GlcNAc...) asparagine glycosylation is present at Asn189. The active-site Proton acceptor is Glu200. Glu201 contributes to the Zn(2+) binding site. Residues Asn212 and Asn217 are each glycosylated (N-linked (GlcNAc...) asparagine). Residues Glu226 and His300 each contribute to the Zn(2+) site. A helical transmembrane segment spans residues 360-380 (FYWNCIFLLVSPVVAIGLYLI). Residues 381–392 (SRDRMTWKSHSW) are Cytoplasmic-facing. A helical membrane pass occupies residues 393–412 (LSWTRFPLSLAAGIIVQKLF). The Vacuolar segment spans residues 413–428 (SNDIIRSNPLTFSRNY). A helical transmembrane segment spans residues 429 to 449 (FWPISAFFTQVIFTSYVLINC). The Cytoplasmic portion of the chain corresponds to 450 to 461 (SNFFFPCADMKS). Residues 462-482 (LSIIELFIILWTILLFTSKLL) form a helical membrane-spanning segment. Residues 483 to 496 (YSSDYRYTGLYPLS) are Vacuolar-facing. Residues 497–517 (IFFLLSTIAAILRLLALALGM) traverse the membrane as a helical segment. Residues 518–627 (RTRKRLGREC…NSLKLEYTDY (110 aa)) are Cytoplasmic-facing. The disordered stretch occupies residues 528–610 (RDHHSNYSSH…PLLKGSNSME (83 aa)). Residues 549–558 (NLEQPQDQFT) show a composition bias toward polar residues. Positions 559–570 (SSQDDQASIQDD) are enriched in low complexity. Residues 582–601 (NVDEDHGMDSSSQQHDERVP) are compositionally biased toward basic and acidic residues. The chain crosses the membrane as a helical span at residues 628–648 (AWIIQFLLIVPIPSFILFNSV). Residues 649–668 (DVIMDALNHTVQEGSKATFD) lie on the Vacuolar side of the membrane. N-linked (GlcNAc...) asparagine glycosylation occurs at Asn656. The chain crosses the membrane as a helical span at residues 669 to 689 (VLRFGMVGSILMALPILPFFY). Residues 690–692 (KVN) lie on the Cytoplasmic side of the membrane. The helical transmembrane segment at 693–713 (YITISLTALLFLISASKTLLV) threads the bilayer. Residues 714–976 (HPFTNSNPLK…LVIVKDAIIL (263 aa)) lie on the Vacuolar side of the membrane. Asn768, Asn796, Asn811, Asn866, and Asn937 each carry an N-linked (GlcNAc...) asparagine glycan.

Belongs to the peptidase M28 family. Requires Zn(2+) as cofactor.

Its subcellular location is the vacuole membrane. Functionally, may be involved in vacuolar sorting and osmoregulation. The polypeptide is Vacuolar membrane protease (Saccharomyces cerevisiae (strain AWRI1631) (Baker's yeast)).